The sequence spans 444 residues: MAEFFPEIPKVQFEGKESTNPLAFKFYDPEEIIDGKPLKDHLKFSVAFWHTFVNEGRDPFGDPTADRPWNRYTDPMDKAFARVDALFEFCEKLNIEYFCFHDRDIAPEGKTLRETNKILDKVVERIKERMKDSNVKLLWGTANLFSHPRYMHGAATTCSADVFAYAAAQVKKALEITKELGGEGYVFWGGREGYETLLNTDLGFELENLARFLRMAVDYAKRIGFTGQFLIEPKPKEPTKHQYDFDVATAYAFLKSHGLDEYFKFNIEANHATLAGHTFQHELRMARILGKLGSIDANQGDLLLGWDTDQFPTNVYDTTLAMYEVIKAGGFTKGGLNFDAKVRRASYKVEDLFIGHIAGMDTFALGFKVAYKLVKDGVLDKFIEEKYRSFREGIGRDIVEGKVDFEKLEEYIIDKETIELPSGKQEYLESLINSYIVKTILELR.

Residues aspartate 307 and aspartate 309 each contribute to the Mg(2+) site.

This sequence belongs to the xylose isomerase family. In terms of assembly, homotetramer. Mg(2+) serves as cofactor.

It is found in the cytoplasm. It catalyses the reaction alpha-D-xylose = alpha-D-xylulofuranose. The polypeptide is Xylose isomerase (Thermotoga neapolitana (strain ATCC 49049 / DSM 4359 / NBRC 107923 / NS-E)).